The following is a 527-amino-acid chain: Peptide chain release factor 3 (527 aa).

A tr-type G domain is found at 9-277 (AKRRTFAIIS…AVVDWAPRPL (269 aa)). Residues 18–25 (SHPDAGKT), 86–90 (DTPGH), and 140–143 (NKLD) contribute to the GTP site.

The protein belongs to the TRAFAC class translation factor GTPase superfamily. Classic translation factor GTPase family. PrfC subfamily.

It localises to the cytoplasm. Its function is as follows. Increases the formation of ribosomal termination complexes and stimulates activities of RF-1 and RF-2. It binds guanine nucleotides and has strong preference for UGA stop codons. It may interact directly with the ribosome. The stimulation of RF-1 and RF-2 is significantly reduced by GTP and GDP, but not by GMP. The protein is Peptide chain release factor 3 of Pseudomonas fluorescens (strain Pf0-1).